We begin with the raw amino-acid sequence, 68 residues long: Large ribosomal subunit protein bL32 (68 aa).

This sequence belongs to the bacterial ribosomal protein bL32 family.

This is Large ribosomal subunit protein bL32 from Ruegeria pomeroyi (strain ATCC 700808 / DSM 15171 / DSS-3) (Silicibacter pomeroyi).